Here is a 491-residue protein sequence, read N- to C-terminus: UDP-N-acetylmuramate--L-alanine ligase (491 aa).

Residue G126–T132 coordinates ATP.

The protein belongs to the MurCDEF family.

It localises to the cytoplasm. It carries out the reaction UDP-N-acetyl-alpha-D-muramate + L-alanine + ATP = UDP-N-acetyl-alpha-D-muramoyl-L-alanine + ADP + phosphate + H(+). It participates in cell wall biogenesis; peptidoglycan biosynthesis. In terms of biological role, cell wall formation. In Salmonella paratyphi C (strain RKS4594), this protein is UDP-N-acetylmuramate--L-alanine ligase.